Here is a 1755-residue protein sequence, read N- to C-terminus: Transposon Ty1-MR2 Gag-Pol polyprotein (1755 aa).

Polar residues-rich tracts occupy residues M1 to P10, T48 to S60, and Q127 to F152. 3 disordered regions span residues M1–Q93, P126–P173, and G352–T421. Residues T153 to T165 show a composition bias toward low complexity. The segment at N299–H401 is RNA-binding. A compositionally biased stretch (low complexity) spans N402–S418. S416 is subject to Phosphoserine. D461 functions as the For protease activity; shared with dimeric partner in the catalytic mechanism. The tract at residues N583–C640 is integrase-type zinc finger-like. The 176-residue stretch at N660–P835 folds into the Integrase catalytic domain. Mg(2+) is bound by residues D671 and D736. 3 disordered regions span residues S956–K1087, R1092–P1111, and D1130–E1186. A compositionally biased stretch (low complexity) spans S960–T969. Positions S1005 to T1015 are enriched in polar residues. Positions E1038–S1053 are enriched in basic and acidic residues. 2 stretches are compositionally biased toward polar residues: residues Y1054–D1082 and P1101–P1111. The Bipartite nuclear localization signal motif lies at K1178 to R1212. The 139-residue stretch at N1338 to Q1476 folds into the Reverse transcriptase Ty1/copia-type domain. D1346, D1427, D1428, D1610, E1652, and D1685 together coordinate Mg(2+). Residues D1610 to K1752 form the RNase H Ty1/copia-type domain.

The capsid protein forms a homotrimer, from which the VLPs are assembled. The protease is a homodimer, whose active site consists of two apposed aspartic acid residues. Post-translationally, initially, virus-like particles (VLPs) are composed of the structural unprocessed proteins Gag and Gag-Pol, and also contain the host initiator methionine tRNA (tRNA(i)-Met) which serves as a primer for minus-strand DNA synthesis, and a dimer of genomic Ty RNA. Processing of the polyproteins occurs within the particle and proceeds by an ordered pathway, called maturation. First, the protease (PR) is released by autocatalytic cleavage of the Gag-Pol polyprotein yielding capsid protein p45 and a Pol-p154 precursor protein. This cleavage is a prerequisite for subsequent processing of Pol-p154 at the remaining sites to release the mature structural and catalytic proteins. Maturation takes place prior to the RT reaction and is required to produce transposition-competent VLPs.

The protein resides in the cytoplasm. Its subcellular location is the nucleus. It carries out the reaction DNA(n) + a 2'-deoxyribonucleoside 5'-triphosphate = DNA(n+1) + diphosphate. It catalyses the reaction Endonucleolytic cleavage to 5'-phosphomonoester.. Functionally, capsid protein (CA) is the structural component of the virus-like particle (VLP), forming the shell that encapsulates the retrotransposons dimeric RNA genome. The particles are assembled from trimer-clustered units and there are holes in the capsid shells that allow for the diffusion of macromolecules. CA also has nucleocapsid-like chaperone activity, promoting primer tRNA(i)-Met annealing to the multipartite primer-binding site (PBS), dimerization of Ty1 RNA and initiation of reverse transcription. The aspartyl protease (PR) mediates the proteolytic cleavages of the Gag and Gag-Pol polyproteins after assembly of the VLP. Its function is as follows. Reverse transcriptase/ribonuclease H (RT) is a multifunctional enzyme that catalyzes the conversion of the retro-elements RNA genome into dsDNA within the VLP. The enzyme displays a DNA polymerase activity that can copy either DNA or RNA templates, and a ribonuclease H (RNase H) activity that cleaves the RNA strand of RNA-DNA heteroduplexes during plus-strand synthesis and hydrolyzes RNA primers. The conversion leads to a linear dsDNA copy of the retrotransposon that includes long terminal repeats (LTRs) at both ends. In terms of biological role, integrase (IN) targets the VLP to the nucleus, where a subparticle preintegration complex (PIC) containing at least integrase and the newly synthesized dsDNA copy of the retrotransposon must transit the nuclear membrane. Once in the nucleus, integrase performs the integration of the dsDNA into the host genome. The sequence is that of Transposon Ty1-MR2 Gag-Pol polyprotein (TY1B-MR2) from Saccharomyces cerevisiae (strain ATCC 204508 / S288c) (Baker's yeast).